The chain runs to 449 residues: Maltose-6'-phosphate glucosidase (449 aa).

Residue 6-72 (FSIVIAGGGS…PDIEFAATTD (67 aa)) participates in NAD(+) binding. Substrate contacts are provided by Arg95 and Asn149. Cys171 lines the Mn(2+) pocket. Residue Asp172 is the Proton donor of the active site. His202 is a binding site for Mn(2+). The Proton acceptor role is filled by Tyr265. Arg285 serves as a coordination point for substrate.

The protein belongs to the glycosyl hydrolase 4 family. In terms of assembly, homotetramer. The cofactor is Mn(2+). Fe(2+) serves as cofactor. It depends on Co(2+) as a cofactor. Requires Ni(2+) as cofactor. NAD(+) is required as a cofactor.

The catalysed reaction is alpha-maltose 6'-phosphate + H2O = D-glucose 6-phosphate + D-glucose. With respect to regulation, cellobiose-6'-phosphate and 6-phospho-beta-D-glucopyranoside are not substrates but competitive inhibitors of GlvA. Hydrolyzes maltose-6'-phosphate and trehalose-6'-phosphate. Is involved in the catabolism of alpha-glycosides accumulated via a phosphoenolpyruvate-dependent maltose phosphotransferase system (PEP-PTS). Is also able to significantly catalyze the hydrolysis of both 6-phospho-alpha- and 6-phospho-beta-glucosides containing activated leaving groups such as p-nitrophenol and does so with retention and inversion, respectively, of the substrate anomeric configuration. In Bacillus subtilis (strain 168), this protein is Maltose-6'-phosphate glucosidase (glvA).